A 126-amino-acid polypeptide reads, in one-letter code: Phosphoribosyl-AMP cyclohydrolase (126 aa).

Residue aspartate 76 coordinates Mg(2+). Cysteine 77 serves as a coordination point for Zn(2+). Mg(2+) is bound by residues aspartate 78 and aspartate 80. Zn(2+) contacts are provided by cysteine 94 and cysteine 101.

Belongs to the PRA-CH family. As to quaternary structure, homodimer. Mg(2+) is required as a cofactor. It depends on Zn(2+) as a cofactor.

It localises to the cytoplasm. The enzyme catalyses 1-(5-phospho-beta-D-ribosyl)-5'-AMP + H2O = 1-(5-phospho-beta-D-ribosyl)-5-[(5-phospho-beta-D-ribosylamino)methylideneamino]imidazole-4-carboxamide. It functions in the pathway amino-acid biosynthesis; L-histidine biosynthesis; L-histidine from 5-phospho-alpha-D-ribose 1-diphosphate: step 3/9. Its function is as follows. Catalyzes the hydrolysis of the adenine ring of phosphoribosyl-AMP. This chain is Phosphoribosyl-AMP cyclohydrolase, found in Ruthia magnifica subsp. Calyptogena magnifica.